A 103-amino-acid polypeptide reads, in one-letter code: Small ribosomal subunit protein uS10c (103 aa).

Belongs to the universal ribosomal protein uS10 family. In terms of assembly, part of the 30S ribosomal subunit.

It localises to the plastid. The protein localises to the chloroplast. Functionally, involved in the binding of tRNA to the ribosomes. This is Small ribosomal subunit protein uS10c from Trieres chinensis (Marine centric diatom).